The sequence spans 123 residues: Aberrant microtubules protein 1 (123 aa).

Functionally, required for normal microtubule organization. The sequence is that of Aberrant microtubules protein 1 (ABM1) from Saccharomyces cerevisiae (strain ATCC 204508 / S288c) (Baker's yeast).